Reading from the N-terminus, the 545-residue chain is Chaperonin GroEL (545 aa).

Residues 29–32, Lys50, 86–90, Gly414, 477–479, and Asp493 contribute to the ATP site; these read TMGP, DGTTT, and DAA.

This sequence belongs to the chaperonin (HSP60) family. As to quaternary structure, forms a cylinder of 14 subunits composed of two heptameric rings stacked back-to-back. Interacts with the co-chaperonin GroES.

It localises to the cytoplasm. It carries out the reaction ATP + H2O + a folded polypeptide = ADP + phosphate + an unfolded polypeptide.. Together with its co-chaperonin GroES, plays an essential role in assisting protein folding. The GroEL-GroES system forms a nano-cage that allows encapsulation of the non-native substrate proteins and provides a physical environment optimized to promote and accelerate protein folding. The sequence is that of Chaperonin GroEL from Campylobacter jejuni (strain RM1221).